Here is a 261-residue protein sequence, read N- to C-terminus: CD40 ligand (261 aa).

At 1–22 the chain is on the cytoplasmic side; it reads MIETYSQPSPRSVATGPPVSMK. Residues 23-46 form a helical; Signal-anchor for type II membrane protein membrane-spanning segment; it reads IFMYLLTVFLITQMIGSALFAVYL. Residues 47 to 261 lie on the Extracellular side of the membrane; the sequence is HRRLDKIEDE…GFTSFGLLKL (215 aa). Positions 122 to 261 constitute a THD domain; that stretch reads IAAHVISEAS…GFTSFGLLKL (140 aa). The cysteines at positions 178 and 218 are disulfide-linked. A glycan (N-linked (GlcNAc...) asparagine) is linked at N240.

Belongs to the tumor necrosis factor family. As to quaternary structure, homotrimer. Interacts with CD28. CD40 ligand, soluble form: Exists as either a monomer or a homotrimer. Forms a ternary complex between CD40 and integrins for CD40-CD40LG signaling. The soluble form derives from the membrane form by proteolytic processing.

It localises to the cell membrane. Its subcellular location is the cell surface. The protein resides in the secreted. Cytokine that acts as a ligand to CD40/TNFRSF5. Costimulates T-cell proliferation and cytokine production. Its cross-linking on T-cells generates a costimulatory signal which enhances the production of IL4 and IL10 in conjunction with the TCR/CD3 ligation and CD28 costimulation. Induces the activation of NF-kappa-B. Induces the activation of kinases MAPK8 and PAK2 in T-cells. Mediates B-cell proliferation in the absence of co-stimulus as well as IgE production in the presence of IL4. Involved in immunoglobulin class switching. Functionally, acts as a ligand for integrins, specifically ITGA5:ITGB1 and ITGAV:ITGB3; both integrins and the CD40 receptor are required for activation of CD40-CD40LG signaling, which have cell-type dependent effects, such as B-cell activation, NF-kappa-B signaling and anti-apoptotic signaling. This is CD40 ligand (CD40LG) from Bos taurus (Bovine).